Reading from the N-terminus, the 662-residue chain is DNA topoisomerase 4 subunit B (662 aa).

ATP contacts are provided by residues tyrosine 20, asparagine 60, aspartate 87, 129–135, and lysine 359; that span reads GLHGVGI. Residues 439–553 form the Toprim domain; sequence TELFIVEGDS…EGHLYLAKPP (115 aa). 3 residues coordinate Mg(2+): glutamate 445, aspartate 518, and aspartate 520.

The protein belongs to the type II topoisomerase family. ParE type 1 subfamily. As to quaternary structure, heterotetramer composed of ParC and ParE. It depends on Mg(2+) as a cofactor. Requires Mn(2+) as cofactor. Ca(2+) serves as cofactor.

The enzyme catalyses ATP-dependent breakage, passage and rejoining of double-stranded DNA.. Its function is as follows. Topoisomerase IV is essential for chromosome segregation. It relaxes supercoiled DNA. Performs the decatenation events required during the replication of a circular DNA molecule. This chain is DNA topoisomerase 4 subunit B, found in Rickettsia prowazekii (strain Madrid E).